We begin with the raw amino-acid sequence, 132 residues long: MKGIRSNIPRALNAGAQIACVDNTGAKVVEIISVKKYRGVKNRMPCAGIGDMCVVSVKKGTPEMRKQILLAVVVRQKQEFRRPDGLHVSFEDNAMVITDEDGIPKGTDIKGPVAREVAERFPKIGTTASIIV.

This sequence belongs to the universal ribosomal protein uL14 family. Part of the 50S ribosomal subunit. Forms a cluster with proteins L3 and L24e, part of which may contact the 16S rRNA in 2 intersubunit bridges.

Functionally, binds to 23S rRNA. Forms part of two intersubunit bridges in the 70S ribosome. The sequence is that of Large ribosomal subunit protein uL14 from Methanosarcina mazei (strain ATCC BAA-159 / DSM 3647 / Goe1 / Go1 / JCM 11833 / OCM 88) (Methanosarcina frisia).